The chain runs to 478 residues: Septin-4 (478 aa).

The disordered stretch occupies residues 1–115; that stretch reads MDRSLGWQGN…RSPWGKLDPY (115 aa). A compositionally biased stretch (basic and acidic residues) spans 13 to 26; the sequence is PEDRTEAGIKRFLE. Residues 95-108 are compositionally biased toward low complexity; it reads APAPLSPSARPRSP. Phosphoserine is present on residues S117 and S118. Residues 141–414 form the Septin-type G domain; the sequence is KGFDFTLMVA…ENYRAQCIQS (274 aa). Residues 151–158 are G1 motif; sequence GESGLGKS. GTP-binding positions include 151 to 158 and T185; that span reads GESGLGKS. Residues 208–211 form a G3 motif region; that stretch reads DTPG. Residues 289-292 form a G4 motif region; sequence AKAD. Residue 290–298 coordinates GTP; that stretch reads KADTLTPPE. The residue at position 325 (S325) is a Phosphoserine. GTP contacts are provided by G348 and R363. The disordered stretch occupies residues 428-448; sequence LTRESGTDFPIPAVPPGTDPE. S432 bears the Phosphoserine mark. The residue at position 434 (T434) is a Phosphothreonine. Residues 447-478 adopt a coiled-coil conformation; the sequence is PETEKLIREKDEELRRMQEMLHKIQKQMKENY.

This sequence belongs to the TRAFAC class TrmE-Era-EngA-EngB-Septin-like GTPase superfamily. Septin GTPase family. Septins polymerize into heterooligomeric protein complexes that form filaments, and can associate with cellular membranes, actin filaments and microtubules. GTPase activity is required for filament formation. Interacts with SEPTIN8. In a mesenchymal cell line, interacts with SEPTIN9 isoform 2 variants HNA Trp-106 and Phe-111, but not the wild type SEPTIN9. Component of a septin core octameric complex consisting of SEPTIN12, SEPTIN7, SEPTIN6 and SEPTIN2 or SEPTIN4 in the order 12-7-6-2-2-6-7-12 or 12-7-6-4-4-6-7-12. Interacts with SEPTIN14 (via C-terminus). Interacts with DYRK1A. Interacts with SLC6A3/DAT and SNCA/alpha-synuclein. Interacts with STX1A; in the striatum. Interacts with XIAP (via BIR3 domain) following the induction of apoptosis. Interacts with AREL1 (via HECT domain); in the cytoplasm following induction of apoptosis. In terms of assembly, part of a complex composed of SEPTIN4 isoform ARTS, XIAP and BCL2, within the complex interacts with both BCL2 (via BH3 domain) and XIAP, ARTS acts as a scaffold protein and stabilizes the complex. Interacts with XIAP (via BIR3 domain) following the induction of apoptosis. Post-translationally, phosphorylated by DYRK1A. In terms of processing, ubiquitinated by AREL1. In terms of tissue distribution, widely expressed in adult and fetal tissues with highest expression in adult brain (at protein level), heart, liver and adrenal gland and fetal heart, kidney, liver and lung. Expressed in presynaptic terminals of dopaminergic neurons projecting from the substantia nigra pars compacta to the striatum (at protein level). Expressed in axonal varicosities in dopaminergic nerve terminals (at protein level). Expressed in the putamen and in the adjacent cerebral cortex (at protein level). Expressed in colonic crypts (at protein level). Also expressed in colorectal cancers and malignant melanomas. Expressed in platelets. Highly expressed in the brain and heart.

The protein resides in the cytoplasm. It localises to the cell projection. It is found in the cilium. Its subcellular location is the flagellum. The protein localises to the cytoplasmic vesicle. The protein resides in the secretory vesicle. It localises to the axon. It is found in the dendrite. Its subcellular location is the perikaryon. The protein localises to the synapse. The protein resides in the mitochondrion. It localises to the nucleus. Functionally, filament-forming cytoskeletal GTPase. Pro-apoptotic protein involved in LGR5-positive intestinal stem cell and Paneth cell expansion in the intestines, via its interaction with XIAP. May also play a role in the regulation of cell fate in the intestine. Positive regulator of apoptosis involved in hematopoietic stem cell homeostasis; via its interaction with XIAP. Negative regulator of repair and hair follicle regeneration in response to injury, due to inhibition of hair follicle stem cell proliferation, potentially via its interaction with XIAP. Plays an important role in male fertility and sperm motility. During spermiogenesis, essential for the establishment of the annulus (a fibrous ring structure connecting the midpiece and the principal piece of the sperm flagellum) which is a requisite for the structural and mechanical integrity of the sperm. Involved in the migration of cortical neurons and the formation of neuron leading processes during embryonic development. Required for dopaminergic metabolism in presynaptic autoreceptors; potentially via activity as a presynaptic scaffold protein. Required for the induction of cell death mediated by TGF-beta and possibly by other apoptotic stimuli. Induces apoptosis through binding and inhibition of XIAP resulting in significant reduction in XIAP levels, leading to caspase activation and cell death. Mediates the interaction between BCL2 and XIAP, thereby positively regulating the ubiquitination and degradation of BCL2 and promoting apoptosis. The sequence is that of Septin-4 from Homo sapiens (Human).